The sequence spans 335 residues: Ketol-acid reductoisomerase (NADP(+)) 2 (335 aa).

The region spanning 1–180 is the KARI N-terminal Rossmann domain; the sequence is MKTYYEKDAN…GCTRAGVIET (180 aa). Residues 24–27, arginine 47, serine 51, and 81–84 each bind NADP(+); these read YGSQ and DEQQ. Residue histidine 106 is part of the active site. Glycine 132 serves as a coordination point for NADP(+). Residues 181-326 enclose the KARI C-terminal knotted domain; the sequence is TFQEETETDL…AELREMMSWI (146 aa). Mg(2+) is bound by residues aspartate 189, glutamate 193, glutamate 225, and glutamate 229. Residue serine 250 participates in substrate binding.

The protein belongs to the ketol-acid reductoisomerase family. Mg(2+) is required as a cofactor.

It catalyses the reaction (2R)-2,3-dihydroxy-3-methylbutanoate + NADP(+) = (2S)-2-acetolactate + NADPH + H(+). The catalysed reaction is (2R,3R)-2,3-dihydroxy-3-methylpentanoate + NADP(+) = (S)-2-ethyl-2-hydroxy-3-oxobutanoate + NADPH + H(+). Its pathway is amino-acid biosynthesis; L-isoleucine biosynthesis; L-isoleucine from 2-oxobutanoate: step 2/4. It functions in the pathway amino-acid biosynthesis; L-valine biosynthesis; L-valine from pyruvate: step 2/4. Its function is as follows. Involved in the biosynthesis of branched-chain amino acids (BCAA). Catalyzes an alkyl-migration followed by a ketol-acid reduction of (S)-2-acetolactate (S2AL) to yield (R)-2,3-dihydroxy-isovalerate. In the isomerase reaction, S2AL is rearranged via a Mg-dependent methyl migration to produce 3-hydroxy-3-methyl-2-ketobutyrate (HMKB). In the reductase reaction, this 2-ketoacid undergoes a metal-dependent reduction by NADPH to yield (R)-2,3-dihydroxy-isovalerate. In Bacillus cereus (strain ZK / E33L), this protein is Ketol-acid reductoisomerase (NADP(+)) 2.